A 30-amino-acid chain; its full sequence is Cycloviolacin-O5 (30 aa).

Residues 1 to 30 (GTPCGESCVWIPCISSAVGCSCKNKVCYKN) constitute a cross-link (cyclopeptide (Gly-Asn)). 3 cysteine pairs are disulfide-bonded: cysteine 4–cysteine 20, cysteine 8–cysteine 22, and cysteine 13–cysteine 27.

Post-translationally, this is a cyclic peptide.

Functionally, probably participates in a plant defense mechanism. This Viola odorata (Sweet violet) protein is Cycloviolacin-O5.